The chain runs to 426 residues: Glutamyl-tRNA reductase (426 aa).

Residues 51–54, Ser110, 115–117, and Gln121 each bind substrate; these read TCNR and EAQ. The active-site Nucleophile is the Cys52. An NADP(+)-binding site is contributed by 190–195; the sequence is GAGEMA.

Belongs to the glutamyl-tRNA reductase family. Homodimer.

The enzyme catalyses (S)-4-amino-5-oxopentanoate + tRNA(Glu) + NADP(+) = L-glutamyl-tRNA(Glu) + NADPH + H(+). It participates in porphyrin-containing compound metabolism; protoporphyrin-IX biosynthesis; 5-aminolevulinate from L-glutamyl-tRNA(Glu): step 1/2. Catalyzes the NADPH-dependent reduction of glutamyl-tRNA(Glu) to glutamate 1-semialdehyde (GSA). This Desulfotalea psychrophila (strain LSv54 / DSM 12343) protein is Glutamyl-tRNA reductase.